Consider the following 999-residue polypeptide: Probable K(+)/H(+) antiporter subunit A/B (999 aa).

The disordered stretch occupies residues 1-20 (MTRPASVLAGPKSRPPIHSQ). A run of 24 helical transmembrane segments spans residues 31–48 (LLSVFILVPFAGSLIAIF), 63–85 (AIALVCFLVTAGLYPYVASGGVL), 106–128 (FAWLFSALITAIGVLVALYARYY), 138–160 (FFALFLAFMGSMLGVVLSGNLIL), 162–181 (AVFWELTSIVSFLLIGYWHH), 191–213 (MALTITGTGGLAMFVGLIIIGKI), 233–255 (PLYGTVLVLVLLGALTKSAQFPF), 270–292 (SAYLHSATMVKAGVFLLVRFWPV), 299–321 (WFWIVGLAGLTTLLLGAYFAIFQ), 336–358 (LGLITVLLSLGSPLAAVAAVFHI), 389–411 (GLFHFMPITATLAMVASAAMAGV), 442–464 (YVATIAGMFAVTYSLRFIHGVFF), 488–510 (FLVLACLVVGIIPAQTIGPFLHT), 530–552 (GWNIPLIMSFVALSGGIGLYFLM), 604–621 (RLLVFLALAAGASPLLLG), 636–653 (AFALLWAIGIACAIGSAY), 660–682 (LASLVLLGGAGLVTCITFVWLSA), 686–708 (AVTQLLVEIVTTVLILLGLRWLP), 729–751 (LRDLLLAIGAGGGMMLIAYTVMT), 788–807 (TLGEIAVLCIVALTVFALLL), 846–868 (FIPAVIMRWMFPVTGMLAAFLFL), 878–900 (FAAGIAMSIGFILQYMSGGTRWV), 913–935 (SIGLLVATATGVGSWFFGYPFLT), and 955–977 (ILFDLGVFSLVLGATVLILIALA).

It in the N-terminal section; belongs to the CPA3 antiporters (TC 2.A.63) subunit A family. This sequence in the C-terminal section; belongs to the CPA3 antiporters (TC 2.A.63) subunit B family. May form a heterooligomeric complex that consists of six subunits: PhaAB, PhaC, PhaD, PhaE, PhaF and PhaG.

The protein resides in the cell membrane. Functionally, part of a K(+) efflux system which is required for the adaptation of R.meliloti to alkaline pH as well as for the infection process during symbiotic nodule development. The protein is Probable K(+)/H(+) antiporter subunit A/B (phaAB) of Rhizobium meliloti (strain 1021) (Ensifer meliloti).